A 124-amino-acid polypeptide reads, in one-letter code: Fluoride-specific ion channel FluC 2 (124 aa).

3 helical membrane passes run 36 to 56 (TFLI…YLAF), 66 to 86 (LFVM…SLDT), and 100 to 120 (LYAI…LALV). Na(+) is bound by residues G74 and T77.

It belongs to the fluoride channel Fluc/FEX (TC 1.A.43) family.

The protein resides in the cell inner membrane. It catalyses the reaction fluoride(in) = fluoride(out). Its activity is regulated as follows. Na(+) is not transported, but it plays an essential structural role and its presence is essential for fluoride channel function. Fluoride-specific ion channel. Important for reducing fluoride concentration in the cell, thus reducing its toxicity. This is Fluoride-specific ion channel FluC 2 from Nitrobacter hamburgensis (strain DSM 10229 / NCIMB 13809 / X14).